Consider the following 104-residue polypeptide: Putative zinc finger protein ORF104b (104 aa).

Residues 62 to 85 form a C2H2-type zinc finger; it reads YECKYCHTRYLSHTGIVYHLEREH.

This is Putative zinc finger protein ORF104b from Acidianus sp. F28 (AFV-2).